A 32-amino-acid polypeptide reads, in one-letter code: Delta-actitoxin-Eqd1a (32 aa).

The protein belongs to the sea anemone short toxin (type III) family. In terms of processing, contains 4 disulfide bonds.

It localises to the secreted. The protein resides in the nematocyst. Binds specifically to sodium channels (Nav) of the axonal membrane of crayfish and prolongs the falling phase of the action potential. It also increases the maximum rates of rise of both action potential and resting potential. Is only active on crustaceans. In Entacmaea quadricolor (Bubble-tip anemone), this protein is Delta-actitoxin-Eqd1a.